We begin with the raw amino-acid sequence, 450 residues long: MTEVSVETTSAGSESPSIPLPVHIDPADLAAELAVVLSERAGEEYLLYERGGEWVLATGVRAMIELDSDELRVIRDGVTQRQHWSGRPGPVLGEAIDRLLLETDQLFGWIAFEFGVYRYGLQQRLAPGTALARVFWPNGRIVVTREAIQLFGTSTGRRDDVLGVLGDGVPGLRDASAVDVVTDPSNYRDRVASAVAEIAAGRYHKVILSRCLQVPFAVDFPSTYRLARRHNTPVRSFLLRLGGIRAVGYSPELVAAVRHDGVVVTEPLAGTRAFGRGALHDRQARDDLESNSKEIVEHAISVRSSLQEMAEIAEPGTAVVTDFMTVRERGSVQHLGSTVSGRLGTSNDRMDALEALFPAVTASGIPKAGGVEAILRLDEGPRGLYSGAVVMVSADGALDAALTLRAAYEHDGKTWLRAGAGIIEESTPEREFEETCEKLSTLAPYLIARQ.

Glutamate 252 functions as the Proton donor in the catalytic mechanism. 270–271 (GT) lines the substrate pocket. Glutamate 297 contributes to the Mg(2+) binding site. Residues tyrosine 385, arginine 405, and 419–421 (GAG) contribute to the substrate site. Mg(2+) is bound by residues glutamate 431 and glutamate 434. Substrate is bound at residue lysine 438.

The protein belongs to the anthranilate synthase component I family. Salicylate synthase subfamily. Monomer. Mg(2+) is required as a cofactor.

The catalysed reaction is chorismate = isochorismate. It catalyses the reaction isochorismate = salicylate + pyruvate. It carries out the reaction chorismate = prephenate. It functions in the pathway siderophore biosynthesis; mycobactin biosynthesis. Involved in the incorporation of salicylate into the virulence-conferring salicylate-based siderophore mycobactin. Catalyzes the initial conversion of chorismate to yield the intermediate isochorismate (isochorismate synthase activity), and the subsequent elimination of the enolpyruvyl side chain in a lyase reaction to give salicylate (isochorismate pyruvate-lyase activity). In the absence of magnesium, MbtI displays a chorismate mutase activity and converts chorismate to prephenate. The protein is Salicylate synthase (mbtI) of Mycolicibacterium paratuberculosis (strain ATCC BAA-968 / K-10) (Mycobacterium paratuberculosis).